A 392-amino-acid chain; its full sequence is Acetyl-CoA acetyltransferase (392 aa).

The active-site Acyl-thioester intermediate is Cys-87. Active-site proton acceptor residues include His-348 and Cys-378.

This sequence belongs to the thiolase-like superfamily. Thiolase family.

The protein localises to the cytoplasm. The enzyme catalyses 2 acetyl-CoA = acetoacetyl-CoA + CoA. It functions in the pathway metabolic intermediate biosynthesis; (R)-mevalonate biosynthesis; (R)-mevalonate from acetyl-CoA: step 1/3. Its function is as follows. Involved in the production of polyhydroxyalkonic acids (PHAs), composed primarily of 3-hydroxybutyric acid (3HB) and 3-hydroxyvaleric acid (3HV). This chain is Acetyl-CoA acetyltransferase (phaA), found in Chromobacterium violaceum (strain ATCC 12472 / DSM 30191 / JCM 1249 / CCUG 213 / NBRC 12614 / NCIMB 9131 / NCTC 9757 / MK).